A 168-amino-acid polypeptide reads, in one-letter code: Lipoprotein signal peptidase (168 aa).

The next 2 membrane-spanning stretches (helical) occupy residues 57–77 and 86–106; these read PKEV…LYVF and FILP…DRIT. Catalysis depends on residues Asp112 and Asp138. A helical transmembrane segment spans residues 131–151; the sequence is WPIFNIADSAITIGACLLILF.

This sequence belongs to the peptidase A8 family.

It is found in the cell inner membrane. The enzyme catalyses Release of signal peptides from bacterial membrane prolipoproteins. Hydrolyzes -Xaa-Yaa-Zaa-|-(S,diacylglyceryl)Cys-, in which Xaa is hydrophobic (preferably Leu), and Yaa (Ala or Ser) and Zaa (Gly or Ala) have small, neutral side chains.. The protein operates within protein modification; lipoprotein biosynthesis (signal peptide cleavage). Its function is as follows. This protein specifically catalyzes the removal of signal peptides from prolipoproteins. In Chlorobium phaeobacteroides (strain DSM 266 / SMG 266 / 2430), this protein is Lipoprotein signal peptidase.